Consider the following 244-residue polypeptide: 7-cyano-7-deazaguanine synthase (244 aa).

Residue Phe-14 to Val-24 coordinates ATP. Cys-202, Cys-217, Cys-220, and Cys-223 together coordinate Zn(2+).

Belongs to the QueC family. Zn(2+) is required as a cofactor.

The enzyme catalyses 7-carboxy-7-deazaguanine + NH4(+) + ATP = 7-cyano-7-deazaguanine + ADP + phosphate + H2O + H(+). It participates in purine metabolism; 7-cyano-7-deazaguanine biosynthesis. In terms of biological role, catalyzes the ATP-dependent conversion of 7-carboxy-7-deazaguanine (CDG) to 7-cyano-7-deazaguanine (preQ(0)). The protein is 7-cyano-7-deazaguanine synthase of Burkholderia vietnamiensis (strain G4 / LMG 22486) (Burkholderia cepacia (strain R1808)).